We begin with the raw amino-acid sequence, 170 residues long: ATP synthase F(1) complex subunit delta, mitochondrial (170 aa).

The transit peptide at 1 to 33 (MIRSIIKSSNNLLKSNVAINSNKRFFATEASAT) directs the protein to the mitochondrion.

Belongs to the ATPase epsilon chain family. As to quaternary structure, component of the ATP synthase complex composed at least of ATP5F1A/subunit alpha, ATP5F1B/subunit beta, ATP5MC1/subunit c (homooctomer), MT-ATP6/subunit a, MT-ATP8/subunit 8, ATP5ME/subunit e, ATP5MF/subunit f, ATP5MG/subunit g, ATP5MK/subunit k, ATP5MJ/subunit j, ATP5F1C/subunit gamma, ATP5F1D/subunit delta, ATP5F1E/subunit epsilon, ATP5PF/subunit F6, ATP5PB/subunit b, ATP5PD/subunit d, ATP5PO/subunit OSCP. ATP synthase complex consists of a soluble F(1) head domain (subunits alpha(3) and beta(3)) - the catalytic core - and a membrane F(0) domain - the membrane proton channel (subunits c, a, 8, e, f, g, k and j). These two domains are linked by a central stalk (subunits gamma, delta, and epsilon) rotating inside the F1 region and a stationary peripheral stalk (subunits F6, b, d, and OSCP).

It is found in the mitochondrion. Its subcellular location is the mitochondrion inner membrane. Functionally, subunit delta, of the mitochondrial membrane ATP synthase complex (F(1)F(0) ATP synthase or Complex V) that produces ATP from ADP in the presence of a proton gradient across the membrane which is generated by electron transport complexes of the respiratory chain. ATP synthase complex consist of a soluble F(1) head domain - the catalytic core - and a membrane F(1) domain - the membrane proton channel. These two domains are linked by a central stalk rotating inside the F(1) region and a stationary peripheral stalk. During catalysis, ATP synthesis in the catalytic domain of F(1) is coupled via a rotary mechanism of the central stalk subunits to proton translocation. In vivo, can only synthesize ATP although its ATP hydrolase activity can be activated artificially in vitro. With the central stalk subunit gamma, is essential for the biogenesis of F(1) catalytic part of the ATP synthase complex namely in the formation of F1 assembly intermediate. In Dictyostelium discoideum (Social amoeba), this protein is ATP synthase F(1) complex subunit delta, mitochondrial.